The following is a 238-amino-acid chain: UPF0280 protein Msm_0088 (238 aa).

The protein belongs to the UPF0280 family.

The protein is UPF0280 protein Msm_0088 of Methanobrevibacter smithii (strain ATCC 35061 / DSM 861 / OCM 144 / PS).